Reading from the N-terminus, the 664-residue chain is Gametogenetin-binding protein 2 (664 aa).

Disordered regions lie at residues 375–425 (QEKK…NTSE) and 447–476 (KKGL…QEGS). The segment covering 376–388 (EKKRQKKNRRKNK) has biased composition (basic residues). Positions 452–475 (PHSNVSDCGYSSSLEGSEPGSQEG) are enriched in polar residues.

Its subcellular location is the cytoplasm. Functionally, may be involved in spermatogenesis. This chain is Gametogenetin-binding protein 2 (ggnbp2), found in Xenopus laevis (African clawed frog).